Reading from the N-terminus, the 507-residue chain is Pyruvate kinase (507 aa).

Residue R50 participates in substrate binding. N52, S54, D84, and T85 together coordinate K(+). 52–55 (NFSH) serves as a coordination point for ATP. ATP contacts are provided by R91 and K177. Residue E242 coordinates Mg(2+). Substrate-binding residues include G265, D266, and T298. D266 contacts Mg(2+).

This sequence belongs to the pyruvate kinase family. Homotetramer. Mg(2+) serves as cofactor. K(+) is required as a cofactor.

The enzyme catalyses pyruvate + ATP = phosphoenolpyruvate + ADP + H(+). It participates in carbohydrate degradation; glycolysis; pyruvate from D-glyceraldehyde 3-phosphate: step 5/5. In Dictyostelium discoideum (Social amoeba), this protein is Pyruvate kinase (pyk).